Reading from the N-terminus, the 145-residue chain is Bacilliredoxin GK2368 (145 aa).

It belongs to the bacilliredoxin family.

The protein is Bacilliredoxin GK2368 of Geobacillus kaustophilus (strain HTA426).